The primary structure comprises 90 residues: Large ribosomal subunit protein bL31B (90 aa).

The protein belongs to the bacterial ribosomal protein bL31 family. Type B subfamily. Part of the 50S ribosomal subunit.

The sequence is that of Large ribosomal subunit protein bL31B from Pseudomonas fluorescens (strain SBW25).